The chain runs to 171 residues: MASEAERTFQRFAVFGESSSSGTEMNNKNFSKLCKDCGIMDGKTVTSTDVDIVFSKVKAKNARTITFQQFQEAMKELGQKRFKGKSPDEALENIYKLMEGKDPATTGVTKATTVGGVSRLTDTSKYTGTHKERFDESGKGKGIAGREDVTDNSGYVSGYKGAGTYDKKGSN.

The interval 120-171 (LTDTSKYTGTHKERFDESGKGKGIAGREDVTDNSGYVSGYKGAGTYDKKGSN) is disordered. The span at 129-149 (THKERFDESGKGKGIAGREDV) shows a compositional bias: basic and acidic residues.

Belongs to the TPPP family.

The protein localises to the cytoplasm. Its subcellular location is the cytosol. It is found in the cell projection. It localises to the cilium. The protein resides in the flagellum. In terms of biological role, probable regulator of microtubule dynamics required for sperm motility. In contrast to other members of the family, has no microtubule bundling activity. In Bos taurus (Bovine), this protein is Tubulin polymerization-promoting protein family member 2.